The primary structure comprises 429 residues: Glutamate-1-semialdehyde 2,1-aminomutase 2 (429 aa).

Lys-268 carries the post-translational modification N6-(pyridoxal phosphate)lysine.

It belongs to the class-III pyridoxal-phosphate-dependent aminotransferase family. HemL subfamily. Homodimer. The cofactor is pyridoxal 5'-phosphate.

The protein localises to the cytoplasm. It catalyses the reaction (S)-4-amino-5-oxopentanoate = 5-aminolevulinate. The protein operates within porphyrin-containing compound metabolism; protoporphyrin-IX biosynthesis; 5-aminolevulinate from L-glutamyl-tRNA(Glu): step 2/2. This chain is Glutamate-1-semialdehyde 2,1-aminomutase 2, found in Bacillus velezensis (strain DSM 23117 / BGSC 10A6 / LMG 26770 / FZB42) (Bacillus amyloliquefaciens subsp. plantarum).